The sequence spans 220 residues: MEFLFGRRKTPEELLRQNQRALNRAMRELDRERQKLEQQEKKIIADIKKMAKQGQMDAVKIMAKDLVRTRRYVKKFIMMRANIQAVSLKIQTLKSNNSMAQAMKGVTKAMATMNRQLKLPQIQKIMMEFEKQSEIMDMKEEMMNDAIDDAMGDEDDEEESDAVVSQVLDELGLTLTDELSNLPSTGGSLSVAGAKKGEATAALADADADLEERLNNLRRD.

Coiled coils occupy residues 12–53 (EELL…MAKQ) and 198–219 (EATA…NLRR). The segment at 196-220 (KGEATAALADADADLEERLNNLRRD) is disordered. Residues 208–218 (ADLEERLNNLR) carry the MIT-interacting motif motif. Over residues 211 to 220 (EERLNNLRRD) the composition is skewed to basic and acidic residues.

The protein belongs to the SNF7 family. As to quaternary structure, probable core component of the endosomal sorting required for transport complex III (ESCRT-III). ESCRT-III components are thought to multimerize to form a flat lattice on the perimeter membrane of the endosome.

Its subcellular location is the late endosome membrane. It is found in the cytoplasm. Its function is as follows. Probable core component of the endosomal sorting required for transport complex III (ESCRT-III) which is involved in multivesicular bodies (MVBs) formation and sorting of endosomal cargo proteins into MVBs. MVBs contain intraluminal vesicles (ILVs) that are generated by invagination and scission from the limiting membrane of the endosome and mostly are delivered to lysosomes enabling degradation of membrane proteins, such as stimulated growth factor receptors, lysosomal enzymes and lipids. The polypeptide is Charged multivesicular body protein 2a (chmp2a) (Xenopus laevis (African clawed frog)).